The sequence spans 232 residues: TIR domain-containing adapter molecule 2 (232 aa).

Residues 1–39 are compositionally biased toward basic and acidic residues; it reads MGVGKSKLDKCPLSWHKKDSVDADQDGHESDSKNSEEAC. Residues 1-70 are disordered; it reads MGVGKSKLDK…EAKGAGPEEQ (70 aa). Residue glycine 2 is the site of N-myristoyl glycine attachment. Residues 74–226 enclose the TIR domain; the sequence is EFLKFVILHA…SIWKETRSVS (153 aa). Tyrosine 164 is modified (phosphotyrosine).

In terms of assembly, homodimer. Interacts with TLR4, TICAM1, IRF3 and IRF7 in response to LPS. Interacts with IL1R1, IL1RAP, IRAK2, IRAK3 and TRAF6. Interacts with protein kinase-inactive mutants of IRAK1 and IRAK4. Isoform 1 interacts with isoform 2; the interaction occurs in late endosomes and disrupts the interaction between isoform 1 and TICAM1. Interacts with MYD88; the interaction decreases after IL-18 stimulation in a time-dependent manner. Interacts with IL18R1 and IL18RAP. Interacts with TLR2. Interacts with RAB11FIP2. Post-translationally, myristoylated. Required for membrane association which is critical for its ability to initiate efficient signaling. Phosphorylated by PRKCE in response to LPS. Phosphorylation is essential for its function. It is depleted from the membrane upon phosphorylation. Tyrosine phosphorylation is inhibited by phosphatase PTPN4.

The protein resides in the cytoplasm. It localises to the golgi apparatus. The protein localises to the cell membrane. It is found in the early endosome. Its subcellular location is the late endosome. The protein resides in the endoplasmic reticulum. It localises to the cell projection. The protein localises to the phagocytic cup. In terms of biological role, functions as a sorting adapter in different signaling pathways to facilitate downstream signaling leading to type I interferon induction. In TLR4 signaling, physically bridges TLR4 and TICAM1 and functionally transmits signal to TICAM1 in early endosomes after endocytosis of TLR4. In TLR2 signaling, physically bridges TLR2 and MYD88 and is required for the TLR2-dependent movement of MYD88 to endosomes following ligand engagement. Involved in IL-18 signaling and is proposed to function as a sorting adapter for MYD88 in IL-18 signaling during adaptive immune response. Forms a complex with RAB11FIP2 that is recruited to the phagosomes to promote the activation of the actin-regulatory GTPases RAC1 and CDC42 and subsequent phagocytosis of Gram-negative bacteria. The chain is TIR domain-containing adapter molecule 2 (Ticam2) from Mus musculus (Mouse).